Reading from the N-terminus, the 238-residue chain is 3-dehydroquinate dehydratase (238 aa).

3-dehydroquinate-binding positions include 35-37 (ELR) and Arg-70. His-133 (proton donor/acceptor) is an active-site residue. The active-site Schiff-base intermediate with substrate is the Lys-160. 3-dehydroquinate-binding residues include Arg-202 and Gln-225.

It belongs to the type-I 3-dehydroquinase family. Homodimer.

It carries out the reaction 3-dehydroquinate = 3-dehydroshikimate + H2O. It participates in metabolic intermediate biosynthesis; chorismate biosynthesis; chorismate from D-erythrose 4-phosphate and phosphoenolpyruvate: step 3/7. Its function is as follows. Involved in the third step of the chorismate pathway, which leads to the biosynthesis of aromatic amino acids. Catalyzes the cis-dehydration of 3-dehydroquinate (DHQ) and introduces the first double bond of the aromatic ring to yield 3-dehydroshikimate. This is 3-dehydroquinate dehydratase from Staphylococcus aureus (strain Mu3 / ATCC 700698).